The sequence spans 542 residues: CTP synthase (542 aa).

Residues Met-1–Ile-265 form an amidoligase domain region. Ser-13 serves as a coordination point for CTP. Ser-13 lines the UTP pocket. Ser-14 to Leu-19 is an ATP binding site. An L-glutamine-binding site is contributed by Tyr-54. Asp-71 lines the ATP pocket. Residues Asp-71 and Glu-139 each coordinate Mg(2+). CTP is bound by residues Asp-146–Glu-148, Lys-186–Gln-191, and Lys-222. UTP-binding positions include Lys-186–Gln-191 and Lys-222. Position 238-240 (Arg-238–Val-240) interacts with ATP. A Glutamine amidotransferase type-1 domain is found at Thr-291–Leu-541. Residue Gly-353 coordinates L-glutamine. Cys-380 acts as the Nucleophile; for glutamine hydrolysis in catalysis. Residues Phe-381 to Gln-384, Glu-404, and Arg-469 contribute to the L-glutamine site. Catalysis depends on residues His-514 and Glu-516.

This sequence belongs to the CTP synthase family. Homotetramer.

It catalyses the reaction UTP + L-glutamine + ATP + H2O = CTP + L-glutamate + ADP + phosphate + 2 H(+). The enzyme catalyses L-glutamine + H2O = L-glutamate + NH4(+). The catalysed reaction is UTP + NH4(+) + ATP = CTP + ADP + phosphate + 2 H(+). It functions in the pathway pyrimidine metabolism; CTP biosynthesis via de novo pathway; CTP from UDP: step 2/2. Its activity is regulated as follows. Allosterically activated by GTP, when glutamine is the substrate; GTP has no effect on the reaction when ammonia is the substrate. The allosteric effector GTP functions by stabilizing the protein conformation that binds the tetrahedral intermediate(s) formed during glutamine hydrolysis. Inhibited by the product CTP, via allosteric rather than competitive inhibition. Its function is as follows. Catalyzes the ATP-dependent amination of UTP to CTP with either L-glutamine or ammonia as the source of nitrogen. Regulates intracellular CTP levels through interactions with the four ribonucleotide triphosphates. The polypeptide is CTP synthase (Beijerinckia indica subsp. indica (strain ATCC 9039 / DSM 1715 / NCIMB 8712)).